A 670-amino-acid chain; its full sequence is Probable leucine-rich repeat receptor-like protein kinase At1g68400 (670 aa).

Residues 1 to 29 form the signal peptide; sequence MAKSSFFNKHLLLSLLILLQSCLLSSSSS. Residues 30–274 are Extracellular-facing; it reads TDSETLLNFK…KSNNTSRIST (245 aa). Asn52, Asn79, Asn102, Asn109, and Asn112 each carry an N-linked (GlcNAc...) asparagine glycan. LRR repeat units follow at residues 69-91, 92-114, 115-137, 139-162, 163-185, and 186-207; these read RVTRLVLEDINLTGSISSLTSLT, SLRVLSLKHNNLSGPIPNLSNLT, ALKLLFLSNNQFSGNFPTSITSL, RLYRLDLSFNNFSGQIPPDLTDLT, HLLTLRLESNRFSGQIPNINLSD, and LQDFNVSGNNFNGQIPNSLSQF. Asn149, Asn182, and Asn190 each carry an N-linked (GlcNAc...) asparagine glycan. The disordered stretch occupies residues 230-266; sequence SSDPTKPGRPDEAKASPLNKPETVPSSPTSIHGGDKS. A compositionally biased stretch (polar residues) spans 253 to 266; the sequence is VPSSPTSIHGGDKS. N-linked (GlcNAc...) asparagine glycosylation occurs at Asn268. A helical membrane pass occupies residues 275-295; it reads ISLIAIILGDFIILSFVSLLL. The Cytoplasmic portion of the chain corresponds to 296 to 670; that stretch reads YYCFWRQYAV…EDTCGGTTSQ (375 aa). The Protein kinase domain maps to 362–636; that stretch reads RASAEMLGKG…GHVVKLIEDI (275 aa). Residue Ser364 is modified to Phosphoserine. Residues 368 to 376 and Lys390 each bind ATP; that span reads LGKGGFGTA. A Phosphoserine modification is found at Ser443. At Thr463 the chain carries Phosphothreonine. The active-site Proton acceptor is Asp491. Thr616 bears the Phosphothreonine mark.

Belongs to the protein kinase superfamily. Ser/Thr protein kinase family.

The protein resides in the cell membrane. The catalysed reaction is L-seryl-[protein] + ATP = O-phospho-L-seryl-[protein] + ADP + H(+). It catalyses the reaction L-threonyl-[protein] + ATP = O-phospho-L-threonyl-[protein] + ADP + H(+). This chain is Probable leucine-rich repeat receptor-like protein kinase At1g68400, found in Arabidopsis thaliana (Mouse-ear cress).